A 426-amino-acid polypeptide reads, in one-letter code: 3-phosphoshikimate 1-carboxyvinyltransferase (426 aa).

3 residues coordinate 3-phosphoshikimate: Lys23, Ser24, and Arg28. Lys23 is a phosphoenolpyruvate binding site. Phosphoenolpyruvate-binding residues include Gly96 and Arg124. Residues Thr170, Ser171, Gln172, Ser198, Asp314, and Lys341 each coordinate 3-phosphoshikimate. Gln172 lines the phosphoenolpyruvate pocket. The active-site Proton acceptor is the Asp314. Positions 345, 386, and 411 each coordinate phosphoenolpyruvate.

This sequence belongs to the EPSP synthase family. Monomer.

The protein localises to the cytoplasm. The catalysed reaction is 3-phosphoshikimate + phosphoenolpyruvate = 5-O-(1-carboxyvinyl)-3-phosphoshikimate + phosphate. The protein operates within metabolic intermediate biosynthesis; chorismate biosynthesis; chorismate from D-erythrose 4-phosphate and phosphoenolpyruvate: step 6/7. Its function is as follows. Catalyzes the transfer of the enolpyruvyl moiety of phosphoenolpyruvate (PEP) to the 5-hydroxyl of shikimate-3-phosphate (S3P) to produce enolpyruvyl shikimate-3-phosphate and inorganic phosphate. This Trichormus variabilis (strain ATCC 29413 / PCC 7937) (Anabaena variabilis) protein is 3-phosphoshikimate 1-carboxyvinyltransferase.